A 295-amino-acid chain; its full sequence is MIKYYNRKNKDYDIEKVAGEKYLNWTYSSPIGMNLLEVFIKKKFFSKIYGFYCDRRLSHKKINKFINDFKIDMSLSENQSSNFKCFNDFFTRKLKKEARPIKTDKNLLISPGDGKILAYENLNLNSVTEVKGINYSFYELINNDSLAKEYDNGTCLVLRLCPTDYHRFHFIDNGICENTIKLKGFYYSVNPIALSKIPSVFCKNKREYSIFHSENFGDIIFMEVGATCVGSIIQTYKPNTKILKGDEKGYFKFGGSTVILFFKKNTIKIDNDILNQSKLGYETSVVMGESIGIKK.

Active-site charge relay system; for autoendoproteolytic cleavage activity residues include aspartate 113, histidine 169, and serine 256. Serine 256 functions as the Schiff-base intermediate with substrate; via pyruvic acid; for decarboxylase activity in the catalytic mechanism. At serine 256 the chain carries Pyruvic acid (Ser); by autocatalysis.

This sequence belongs to the phosphatidylserine decarboxylase family. PSD-B subfamily. Prokaryotic type II sub-subfamily. In terms of assembly, heterodimer of a large membrane-associated beta subunit and a small pyruvoyl-containing alpha subunit. Pyruvate serves as cofactor. Post-translationally, is synthesized initially as an inactive proenzyme. Formation of the active enzyme involves a self-maturation process in which the active site pyruvoyl group is generated from an internal serine residue via an autocatalytic post-translational modification. Two non-identical subunits are generated from the proenzyme in this reaction, and the pyruvate is formed at the N-terminus of the alpha chain, which is derived from the carboxyl end of the proenzyme. The autoendoproteolytic cleavage occurs by a canonical serine protease mechanism, in which the side chain hydroxyl group of the serine supplies its oxygen atom to form the C-terminus of the beta chain, while the remainder of the serine residue undergoes an oxidative deamination to produce ammonia and the pyruvoyl prosthetic group on the alpha chain. During this reaction, the Ser that is part of the protease active site of the proenzyme becomes the pyruvoyl prosthetic group, which constitutes an essential element of the active site of the mature decarboxylase.

Its subcellular location is the cell membrane. The catalysed reaction is a 1,2-diacyl-sn-glycero-3-phospho-L-serine + H(+) = a 1,2-diacyl-sn-glycero-3-phosphoethanolamine + CO2. Its pathway is phospholipid metabolism; phosphatidylethanolamine biosynthesis; phosphatidylethanolamine from CDP-diacylglycerol: step 2/2. Catalyzes the formation of phosphatidylethanolamine (PtdEtn) from phosphatidylserine (PtdSer). The sequence is that of Phosphatidylserine decarboxylase proenzyme from Clostridium botulinum (strain ATCC 19397 / Type A).